Reading from the N-terminus, the 200-residue chain is Phosphoprotein p30 (200 aa).

This sequence belongs to the asfivirus phosphoprotein p30 family. As to quaternary structure, oligomer. Interacts with host HNRNPK. Post-translationally, phosphorylated on serine residues in the 115 N-terminal amino acids.

It localises to the host cytoplasm. It is found in the host nucleus. Its subcellular location is the virion. Its function is as follows. Modifies the subcellular distribution of heterogeneous nuclear ribonucleoprotein K (HNRNPK) and may contribute to modulate HNRNPK functions related to processing and export of mRNAs during ASFV infection. Necessary for virus internalization. In African swine fever virus (isolate Tick/Malawi/Lil 20-1/1983) (ASFV), this protein is Phosphoprotein p30.